Here is a 1220-residue protein sequence, read N- to C-terminus: Protein patched homolog 1 (1220 aa).

Positions M1–P27 are disordered. Residues M1–K84 lie on the Cytoplasmic side of the membrane. The helical transmembrane segment at V85–I105 threads the bilayer. The Extracellular segment spans residues E106–D419. An N-linked (GlcNAc...) asparagine glycan is attached at N397. The chain crosses the membrane as a helical span at residues V420 to M440. The 159-residue stretch at S421–L579 folds into the SSD domain. Residues L441–Q449 are Cytoplasmic-facing. Residues G450–L470 form a helical membrane-spanning segment. Topologically, residues C471–Q484 are extracellular. Residues V485–F505 form a helical membrane-spanning segment. Topologically, residues T506–S528 are cytoplasmic. The helical transmembrane segment at V529–P549 threads the bilayer. Topologically, residues A550 to A558 are extracellular. A helical membrane pass occupies residues A559–L579. Topologically, residues D580–K739 are cytoplasmic. The helical transmembrane segment at T740–V760 threads the bilayer. Residues H761 to W1016 lie on the Extracellular side of the membrane. Residues N865 and N888 are each glycosylated (N-linked (GlcNAc...) asparagine). The helical transmembrane segment at F1017–L1037 threads the bilayer. The Cytoplasmic segment spans residues N1038–V1044. Residues I1045–I1065 traverse the membrane as a helical segment. Residues K1066–V1072 are Extracellular-facing. Residues V1073–F1093 form a helical membrane-spanning segment. Residues L1094–H1110 lie on the Cytoplasmic side of the membrane. The helical transmembrane segment at M1111–G1131 threads the bilayer. The Extracellular portion of the chain corresponds to S1132–A1143. A helical transmembrane segment spans residues V1144–L1164. Topologically, residues S1165 to Y1220 are cytoplasmic.

The protein belongs to the patched family. Post-translationally, glycosylation is necessary for SHH binding. As to expression, detected in embryonic presomitic mesoderm, neuroectoderm, tissue surrounding the notochord, ventral neural tube.

It localises to the membrane. Its function is as follows. Acts as a receptor for sonic hedgehog (SHH), indian hedgehog (IHH) and desert hedgehog (DHH). Associates with the smoothened protein (SMO) to transduce the hedgehog's proteins signal. This Danio rerio (Zebrafish) protein is Protein patched homolog 1 (ptch1).